A 294-amino-acid polypeptide reads, in one-letter code: MHPRFQTAFAQLADNLQSALAPILANHHFPAMLTAEQVSTLKNTAGLDEDALAFALLPLAAACARTDLSHFNVGAIARGVSGNWYFGANMEFLGATMQQTVHAEQSAISHAWLRGEKGLAAVTVNYTPCGHCRQFMNELNSGLDLRIHLPGRAPHTLRDYLPDAFGPKDLEIKTLLMDEQDHGFTLTGDTLTQAAITAANKSHMPYSHSPSGVALECKDGRIFTGSYAENAAFNPTLPPLQGALNLLSLNGYDYADIQRAILAEKGDAALIQWDATAATLKALGCHNIDRVLLG.

CMP/dCMP-type deaminase domains are found at residues 48–168 (DEDA…FGPK) and 186–294 (LTGD…VLLG). 89 to 91 (NME) contacts substrate. His-102 is a binding site for Zn(2+). Glu-104 serves as the catalytic Proton donor. The Zn(2+) site is built by Cys-129 and Cys-132.

Belongs to the cytidine and deoxycytidylate deaminase family. As to quaternary structure, homodimer. It depends on Zn(2+) as a cofactor.

The enzyme catalyses cytidine + H2O + H(+) = uridine + NH4(+). It catalyses the reaction 2'-deoxycytidine + H2O + H(+) = 2'-deoxyuridine + NH4(+). This enzyme scavenges exogenous and endogenous cytidine and 2'-deoxycytidine for UMP synthesis. This chain is Cytidine deaminase, found in Salmonella newport (strain SL254).